The chain runs to 240 residues: Peptidyl-tRNA hydrolase (240 aa).

Y14 provides a ligand contact to tRNA. Residue H19 is the Proton acceptor of the active site. 3 residues coordinate tRNA: Y64, N66, and N112. A compositionally biased stretch (basic and acidic residues) spans K190–P204. Positions K190–E240 are disordered. The segment covering H209 to P219 has biased composition (polar residues).

The protein belongs to the PTH family. Monomer.

Its subcellular location is the cytoplasm. It catalyses the reaction an N-acyl-L-alpha-aminoacyl-tRNA + H2O = an N-acyl-L-amino acid + a tRNA + H(+). Hydrolyzes ribosome-free peptidyl-tRNAs (with 1 or more amino acids incorporated), which drop off the ribosome during protein synthesis, or as a result of ribosome stalling. In terms of biological role, catalyzes the release of premature peptidyl moieties from peptidyl-tRNA molecules trapped in stalled 50S ribosomal subunits, and thus maintains levels of free tRNAs and 50S ribosomes. In Rhizobium etli (strain ATCC 51251 / DSM 11541 / JCM 21823 / NBRC 15573 / CFN 42), this protein is Peptidyl-tRNA hydrolase.